The chain runs to 194 residues: Holliday junction branch migration complex subunit RuvA (194 aa).

Positions Met1–Leu64 are domain I. The tract at residues Ser65–Ser140 is domain II. The interval Ser140–Lys144 is flexible linker. Positions Leu145–Arg194 are domain III.

Belongs to the RuvA family. As to quaternary structure, homotetramer. Forms an RuvA(8)-RuvB(12)-Holliday junction (HJ) complex. HJ DNA is sandwiched between 2 RuvA tetramers; dsDNA enters through RuvA and exits via RuvB. An RuvB hexamer assembles on each DNA strand where it exits the tetramer. Each RuvB hexamer is contacted by two RuvA subunits (via domain III) on 2 adjacent RuvB subunits; this complex drives branch migration. In the full resolvosome a probable DNA-RuvA(4)-RuvB(12)-RuvC(2) complex forms which resolves the HJ.

Its subcellular location is the cytoplasm. Its function is as follows. The RuvA-RuvB-RuvC complex processes Holliday junction (HJ) DNA during genetic recombination and DNA repair, while the RuvA-RuvB complex plays an important role in the rescue of blocked DNA replication forks via replication fork reversal (RFR). RuvA specifically binds to HJ cruciform DNA, conferring on it an open structure. The RuvB hexamer acts as an ATP-dependent pump, pulling dsDNA into and through the RuvAB complex. HJ branch migration allows RuvC to scan DNA until it finds its consensus sequence, where it cleaves and resolves the cruciform DNA. This Xylella fastidiosa (strain 9a5c) protein is Holliday junction branch migration complex subunit RuvA.